Reading from the N-terminus, the 232-residue chain is 5'-methylthioadenosine/S-adenosylhomocysteine nucleosidase (232 aa).

E12 acts as the Proton acceptor in catalysis. Substrate contacts are provided by residues G78, I152, and 173–174 (ME). The active-site Proton donor is the D197.

It belongs to the PNP/UDP phosphorylase family. MtnN subfamily. Homodimer.

It carries out the reaction S-adenosyl-L-homocysteine + H2O = S-(5-deoxy-D-ribos-5-yl)-L-homocysteine + adenine. The catalysed reaction is S-methyl-5'-thioadenosine + H2O = 5-(methylsulfanyl)-D-ribose + adenine. It catalyses the reaction 5'-deoxyadenosine + H2O = 5-deoxy-D-ribose + adenine. The protein operates within amino-acid biosynthesis; L-methionine biosynthesis via salvage pathway; S-methyl-5-thio-alpha-D-ribose 1-phosphate from S-methyl-5'-thioadenosine (hydrolase route): step 1/2. Functionally, catalyzes the irreversible cleavage of the glycosidic bond in both 5'-methylthioadenosine (MTA) and S-adenosylhomocysteine (SAH/AdoHcy) to adenine and the corresponding thioribose, 5'-methylthioribose and S-ribosylhomocysteine, respectively. Also cleaves 5'-deoxyadenosine, a toxic by-product of radical S-adenosylmethionine (SAM) enzymes, into 5-deoxyribose and adenine. Thus, is required for in vivo function of the radical SAM enzymes biotin synthase and lipoic acid synthase, that are inhibited by 5'-deoxyadenosine accumulation. In Klebsiella pneumoniae (strain 342), this protein is 5'-methylthioadenosine/S-adenosylhomocysteine nucleosidase.